The following is a 461-amino-acid chain: Serine carboxypeptidase-like 45 (461 aa).

Positions 1–24 are cleaved as a signal peptide; it reads MSPLQWLTISFALIIFHSLTVSSS. 3 disulfides stabilise this stretch: Cys86–Cys340, Cys243–Cys261, and Cys286–Cys309. An N-linked (GlcNAc...) asparagine glycan is attached at Asn168. Ser177 is a catalytic residue. Asn244 is a glycosylation site (N-linked (GlcNAc...) asparagine). Active-site residues include Asp377 and His434.

Belongs to the peptidase S10 family. In terms of tissue distribution, ubiquitous.

Its subcellular location is the secreted. Its function is as follows. Probable carboxypeptidase. The polypeptide is Serine carboxypeptidase-like 45 (SCPL45) (Arabidopsis thaliana (Mouse-ear cress)).